A 220-amino-acid chain; its full sequence is Protein CREG1 (220 aa).

An N-terminal signal peptide occupies residues 1–31; it reads MAGLSRGSARALLAALLASTLLALLVSPARG. N160, N193, and N216 each carry an N-linked (GlcNAc...) asparagine glycan.

The protein belongs to the CREG family. In terms of assembly, homodimer. Interacts with IGF2R; the interaction is dependent on glycosylation. N-glycosylated.

The protein resides in the secreted. In terms of biological role, may contribute to the transcriptional control of cell growth and differentiation. Antagonizes transcriptional activation and cellular transformation by the adenovirus E1A protein. The transcriptional control activity of cell growth requires interaction with IGF2R. In Homo sapiens (Human), this protein is Protein CREG1 (CREG1).